Here is a 230-residue protein sequence, read N- to C-terminus: Cytidylate kinase (230 aa).

12-20 lines the ATP pocket; the sequence is GPSGAGKGT.

It belongs to the cytidylate kinase family. Type 1 subfamily.

Its subcellular location is the cytoplasm. It catalyses the reaction CMP + ATP = CDP + ADP. It carries out the reaction dCMP + ATP = dCDP + ADP. The protein is Cytidylate kinase of Aeromonas hydrophila subsp. hydrophila (strain ATCC 7966 / DSM 30187 / BCRC 13018 / CCUG 14551 / JCM 1027 / KCTC 2358 / NCIMB 9240 / NCTC 8049).